Reading from the N-terminus, the 420-residue chain is UDP-N-acetyl-D-mannosamine dehydrogenase (420 aa).

Tyr13, Ile14, Asp33, Thr85, and Thr126 together coordinate NAD(+). Positions 160, 161, 212, 216, 219, 250, 252, and 263 each coordinate UDP-N-acetyl-alpha-D-mannosaminouronate. The active-site Proton donor/acceptor is Lys212. The active-site Nucleophile is the Cys266. The UDP-N-acetyl-alpha-D-mannosaminouronate site is built by Phe330 and Lys331. NAD(+) is bound at residue Arg338. Lys416 contributes to the UDP-N-acetyl-alpha-D-mannosaminouronate binding site.

Belongs to the UDP-glucose/GDP-mannose dehydrogenase family. WecC subfamily. In terms of assembly, homodimer.

The catalysed reaction is UDP-N-acetyl-alpha-D-mannosamine + 2 NAD(+) + H2O = UDP-N-acetyl-alpha-D-mannosaminouronate + 2 NADH + 3 H(+). The protein operates within bacterial outer membrane biogenesis; enterobacterial common antigen biosynthesis. Its function is as follows. Catalyzes the four-electron oxidation of UDP-N-acetyl-D-mannosamine (UDP-ManNAc), reducing NAD(+) and releasing UDP-N-acetylmannosaminuronic acid (UDP-ManNAcA). The chain is UDP-N-acetyl-D-mannosamine dehydrogenase from Shigella flexneri.